We begin with the raw amino-acid sequence, 162 residues long: Cyclic pyranopterin monophosphate synthase (162 aa).

Substrate is bound by residues 75–77 and 113–114; these read LCH and ME. Aspartate 128 is a catalytic residue.

The protein belongs to the MoaC family. As to quaternary structure, homohexamer; trimer of dimers.

It carries out the reaction (8S)-3',8-cyclo-7,8-dihydroguanosine 5'-triphosphate = cyclic pyranopterin phosphate + diphosphate. It participates in cofactor biosynthesis; molybdopterin biosynthesis. Functionally, catalyzes the conversion of (8S)-3',8-cyclo-7,8-dihydroguanosine 5'-triphosphate to cyclic pyranopterin monophosphate (cPMP). This chain is Cyclic pyranopterin monophosphate synthase, found in Klebsiella pneumoniae subsp. pneumoniae (strain ATCC 700721 / MGH 78578).